Consider the following 78-residue polypeptide: DNA-directed RNA polymerase subunit omega (78 aa).

The protein belongs to the RNA polymerase subunit omega family. In terms of assembly, in cyanobacteria the RNAP catalytic core is composed of 2 alpha, 1 beta, 1 beta', 1 gamma and 1 omega subunit. When a sigma factor is associated with the core the holoenzyme is formed, which can initiate transcription.

The catalysed reaction is RNA(n) + a ribonucleoside 5'-triphosphate = RNA(n+1) + diphosphate. Promotes RNA polymerase assembly. Latches the N- and C-terminal regions of the beta' subunit thereby facilitating its interaction with the beta and alpha subunits. The protein is DNA-directed RNA polymerase subunit omega of Prochlorococcus marinus subsp. pastoris (strain CCMP1986 / NIES-2087 / MED4).